A 291-amino-acid polypeptide reads, in one-letter code: Probable cell wall amidase LytH (291 aa).

An N-terminal signal peptide occupies residues 1–40 (MKKFNDWLEKHNLRNIPTLIVVVAFVLFVFMTIAFLNHND). An SH3b domain is found at 41–105 (EDSSTIYITE…WVAGWHTNLN (65 aa)). The tract at residues 109 to 146 (DKNPNAKPLKDKTIVLDPGHGGSDQGASSNTHKKSKEK) is disordered. Positions 122 to 286 (IVLDPGHGGS…VEQAIVEGLR (165 aa)) constitute a MurNAc-LAA domain.

It belongs to the N-acetylmuramoyl-L-alanine amidase 3 family.

The protein resides in the secreted. Functionally, probably involved in cell-wall metabolism. In Staphylococcus saprophyticus subsp. saprophyticus (strain ATCC 15305 / DSM 20229 / NCIMB 8711 / NCTC 7292 / S-41), this protein is Probable cell wall amidase LytH (lytH).